Consider the following 125-residue polypeptide: Large ribosomal subunit protein bL19 (125 aa).

It belongs to the bacterial ribosomal protein bL19 family.

This protein is located at the 30S-50S ribosomal subunit interface and may play a role in the structure and function of the aminoacyl-tRNA binding site. This chain is Large ribosomal subunit protein bL19, found in Ehrlichia ruminantium (strain Gardel).